The following is a 186-amino-acid chain: MTLLVGLGNPTLRYAHTRHNAGFDILDSLISELDLSFTFSSKHNACLCVYKDFILLKPQTYMNLSGESVLSAKNFYKTEELLIVHDDLDLDLGVVRFKNGGGNGGHNGLKSIDLLCSNSYYRLRVGISKGMGVIEHVLSKFHKNEEPLKNAAFEHAKNALKFFIESHDFNAMQNRFTLKKPLKIES.

Tyrosine 14 is a binding site for tRNA. The active-site Proton acceptor is histidine 19. Residues tyrosine 61, asparagine 63, and asparagine 107 each contribute to the tRNA site.

This sequence belongs to the PTH family. As to quaternary structure, monomer.

It is found in the cytoplasm. It catalyses the reaction an N-acyl-L-alpha-aminoacyl-tRNA + H2O = an N-acyl-L-amino acid + a tRNA + H(+). Its function is as follows. Hydrolyzes ribosome-free peptidyl-tRNAs (with 1 or more amino acids incorporated), which drop off the ribosome during protein synthesis, or as a result of ribosome stalling. In terms of biological role, catalyzes the release of premature peptidyl moieties from peptidyl-tRNA molecules trapped in stalled 50S ribosomal subunits, and thus maintains levels of free tRNAs and 50S ribosomes. This Helicobacter pylori (strain Shi470) protein is Peptidyl-tRNA hydrolase.